We begin with the raw amino-acid sequence, 1046 residues long: Toluene efflux pump membrane transporter TtgE (1046 aa).

Transmembrane regions (helical) follow at residues 10-30, 339-359, 370-390, 392-412, 440-460, 470-490, 542-562, 871-891, 895-915, 927-947, 973-993, and 1008-1028; these read IFAW…LTKM, SVVH…FLFL, LAVP…GISI, VLTM…AIVV, GALV…AFFG, FAVT…IFTP, LIFA…PKAF, APML…ALYE, VPMS…LATL, VGLM…IEFA, IIMT…ATGA, and GMIT…VVVV.

This sequence belongs to the resistance-nodulation-cell division (RND) (TC 2.A.6) family.

The protein resides in the cell inner membrane. In terms of biological role, the inner membrane transporter component of an inducible organic solvent efflux pump. Involved in export of toluene and styrene but not of m-xylene, propylbenzene or ethylbenzene. Is not involved in antibiotic or AMP efflux. The chain is Toluene efflux pump membrane transporter TtgE (ttgE) from Pseudomonas putida (strain DOT-T1E).